The sequence spans 1738 residues: Complement C4-B (1738 aa).

A signal peptide spans Met1–Gln19. A disulfide bridge links Cys66 with Cys95. Asn224 carries N-linked (GlcNAc...) asparagine glycosylation. Cysteines 633 and 667 form a disulfide. Residues Arg674–Arg677 constitute a propeptide that is removed on maturation. Disulfide bonds link Cys700-Cys726, Cys701-Cys733, and Cys714-Cys734. The 35-residue stretch at Cys700 to Cys734 folds into the Anaphylatoxin-like domain. Residue Asn743 is glycosylated (N-linked (GlcNAc...) asparagine). Residues Cys1006–Gln1009 constitute a cross-link (isoglutamyl cysteine thioester (Cys-Gln)). Residues Asn1324 and Asn1387 are each glycosylated (N-linked (GlcNAc...) asparagine). Residues Tyr1413, Tyr1416, and Tyr1417 each carry the sulfotyrosine modification. A propeptide spanning residues Arg1444–Arg1447 is cleaved from the precursor. 5 disulfide bridges follow: Cys1465–Cys1529, Cys1577–Cys1582, Cys1589–Cys1667, Cys1612–Cys1736, and Cys1712–Cys1721. The NTR domain occupies Cys1589–Cys1736.

In absence of complement activation, circulates in blood as a disulfide-linked trimer of an alpha, beta and gamma chain. In terms of assembly, complement C4b is composed of complement C4b-A, complement C4 beta and complement C4 gamma chains that are associated via disulfide bonds. Non-enzymatic component of the C3 convertase, also named C4bC2b, composed of the serine protease complement C2b (C2), as well as complement C4b. Non-enzymatic component of the C5 convertase, also named C4bC2bC3b, composed of the serine protease complement C2b (C2), complement C3b, as well as complement C4b. Post-translationally, prior to secretion, the single-chain precursor is enzymatically cleaved by plasminogen (PLG) to yield non-identical chains alpha, beta and gamma. During activation of the complement systems, the alpha chain is cleaved into C4a and C4b by different proteases depending on the complement pathway: C4b stays linked to the beta and gamma chains, while C4a is released in the plasma. The alpha chain is cleaved by C1S to generate C4a and C4b following activation by the classical complement system. The alpha chain is cleaved to generate C4a and C4b by MASP2 following activation by the lectin complement system. The alpha chain is cleaved by GZMK to generate C4a and C4b following activation by the GZMK complement system. Further degradation of C4b by C1 into the inactive fragments C4c and C4d blocks the generation of C3 convertase. The proteolytic cleavages often are incomplete so that many structural forms can be found in plasma. Upon activation, the internal thioester bond reacts with carbohydrate antigens on the target surface to form amide or ester bonds, leading to covalent association with the surface of pathogens. In terms of processing, complement C4b interacts with complement C3b via a thioester linkage.

It localises to the secreted. Its subcellular location is the cell surface. In terms of biological role, precursor of non-enzymatic components of the classical, lectin and GZMK complement pathways, which consist in a cascade of proteins that leads to phagocytosis and breakdown of pathogens and signaling that strengthens the adaptive immune system. Non-enzymatic component of C3 and C5 convertases. Generated following cleavage by complement proteases (C1S, MASP2 or GZMK, depending on the complement pathway), it covalently attaches to the surface of pathogens, where it acts as an opsonin that marks the surface of antigens for removal. It then recruits the serine protease complement C2b to form the C3 and C5 convertases, which cleave and activate C3 and C5, respectively, the next components of the complement pathways. Complement C4b-A isotype is responsible for effective binding to form amide bonds with immune aggregates or protein antigens, while complement C4b-B isotype catalyzes the transacylation of the thioester carbonyl group to form ester bonds with carbohydrate antigens. Functionally, putative humoral mediator released following cleavage by complement proteases (C1S, MASP2 or GZMK, depending on the complement pathway). While it is strongly similar to anaphylatoxins, its role is unclear. Was reported to act as a mediator of local inflammatory process; however these effects were probably due to contamination with C3a and/C5a anaphylatoxins in biological assays. This is Complement C4-B from Mus musculus (Mouse).